A 138-amino-acid polypeptide reads, in one-letter code: Putative nickel-responsive regulator (138 aa).

Ni(2+)-binding residues include His76, His87, His89, and Cys95.

The protein belongs to the transcriptional regulatory CopG/NikR family. Ni(2+) is required as a cofactor.

Its function is as follows. Transcriptional regulator. The sequence is that of Putative nickel-responsive regulator from Pseudomonas putida (strain W619).